The chain runs to 365 residues: Ribosomal RNA large subunit methyltransferase F (365 aa).

A disordered region spans residues 1-50; that stretch reads MSKPAVKSVPSATAKTATRAANPRQKAKAPKQAKPEGKGRAKPSKDKPRA. The span at 33–50 shows a compositional bias: basic and acidic residues; the sequence is AKPEGKGRAKPSKDKPRA.

Belongs to the methyltransferase superfamily. METTL16/RlmF family.

It is found in the cytoplasm. It catalyses the reaction adenosine(1618) in 23S rRNA + S-adenosyl-L-methionine = N(6)-methyladenosine(1618) in 23S rRNA + S-adenosyl-L-homocysteine + H(+). Specifically methylates the adenine in position 1618 of 23S rRNA. This is Ribosomal RNA large subunit methyltransferase F from Shewanella baltica (strain OS195).